The primary structure comprises 137 residues: Cellular retinoic acid-binding protein 1 (137 aa).

A Nuclear localization signal motif is present at residues 21-31; it reads RALGVNAMLRK. Residue 132-134 coordinates all-trans-retinoate; it reads RIY.

It belongs to the calycin superfamily. Fatty-acid binding protein (FABP) family.

Its subcellular location is the cytoplasm. Cytosolic CRABPs may regulate the access of retinoic acid to the nuclear retinoic acid receptors. This is Cellular retinoic acid-binding protein 1 (CRABP1) from Pelodiscus sinensis (Chinese softshell turtle).